The following is a 420-amino-acid chain: Innexin-3 (420 aa).

Helical transmembrane passes span 33–53 (ATLL…GSAI), 104–124 (WVPI…WIWS), 193–213 (MLYI…FIIL), and 278–298 (IYLF…INTL). The interval 378 to 405 (NRDFHHGHSTKSTSPGLEEGHHEHLYTP) is disordered. Residues 395–405 (EEGHHEHLYTP) are compositionally biased toward basic and acidic residues.

The protein belongs to the pannexin family. Interacts with F-actin. In terms of tissue distribution, evenly distributed along the adjoining membranes of the two pm5 pharyngeal muscle cells.

The protein resides in the cell membrane. It localises to the cell junction. The protein localises to the gap junction. Functionally, structural component of gap junctions. Plays a role in maintaining gap junction activity to promote phayngeal muscle contraction. This is Innexin-3 from Caenorhabditis elegans.